We begin with the raw amino-acid sequence, 131 residues long: Peptide methionine sulfoxide reductase MsrB (131 aa).

The MsrB domain maps to 8–130 (DAEWRAQLTD…NSVCLDLKRS (123 aa)). 4 residues coordinate Zn(2+): C47, C50, C96, and C99. C119 functions as the Nucleophile in the catalytic mechanism.

The protein belongs to the MsrB Met sulfoxide reductase family. It depends on Zn(2+) as a cofactor.

The enzyme catalyses L-methionyl-[protein] + [thioredoxin]-disulfide + H2O = L-methionyl-(R)-S-oxide-[protein] + [thioredoxin]-dithiol. The polypeptide is Peptide methionine sulfoxide reductase MsrB (Alkalilimnicola ehrlichii (strain ATCC BAA-1101 / DSM 17681 / MLHE-1)).